A 198-amino-acid polypeptide reads, in one-letter code: MHSEAEESKEVATDVFNSKNLAVQAQKKILGKMVSKSIATTLIDDTSSEVLDELYRVTREYTQNKKEAEKIIKNLIKTVIKLAILYRNNQFNQDELALMEKFKKKVHQLAMTVVSFHQVDYTFDRNVLSRLLNECREMLHQIIRRHLTAKSHGRVNNVFDHFSDCDFLAALYNPFGNFKPHLQKLCDGINKMLDEENI.

Residues Glu49–Ala83 adopt a coiled-coil conformation.

It belongs to the TNFAIP8 family.

The protein resides in the cytoplasm. In terms of biological role, acts as a negative mediator of apoptosis. Suppresses the TNF-mediated apoptosis by inhibiting caspase-8 activity but not the processing of procaspase-8, subsequently resulting in inhibition of BID cleavage and caspase-3 activation. The chain is Tumor necrosis factor alpha-induced protein 8 (TNFAIP8) from Pongo abelii (Sumatran orangutan).